The following is an 88-amino-acid chain: ATP synthase subunit c 2 (88 aa).

Helical transmembrane passes span 4–24 (FSWVMITAGFGMAIGSLGTGI) and 53–73 (IGLAMIESLAIYVFVVAMIIL).

It belongs to the ATPase C chain family. In terms of assembly, F-type ATPases have 2 components, F(1) - the catalytic core - and F(0) - the membrane proton channel. F(1) has five subunits: alpha(3), beta(3), gamma(1), delta(1), epsilon(1). F(0) has three main subunits: a(1), b(2) and c(10-14). The alpha and beta chains form an alternating ring which encloses part of the gamma chain. F(1) is attached to F(0) by a central stalk formed by the gamma and epsilon chains, while a peripheral stalk is formed by the delta and b chains.

The protein localises to the cell inner membrane. In terms of biological role, f(1)F(0) ATP synthase produces ATP from ADP in the presence of a proton or sodium gradient. F-type ATPases consist of two structural domains, F(1) containing the extramembraneous catalytic core and F(0) containing the membrane proton channel, linked together by a central stalk and a peripheral stalk. During catalysis, ATP synthesis in the catalytic domain of F(1) is coupled via a rotary mechanism of the central stalk subunits to proton translocation. Its function is as follows. Key component of the F(0) channel; it plays a direct role in translocation across the membrane. A homomeric c-ring of between 10-14 subunits forms the central stalk rotor element with the F(1) delta and epsilon subunits. This Syntrophotalea carbinolica (strain DSM 2380 / NBRC 103641 / GraBd1) (Pelobacter carbinolicus) protein is ATP synthase subunit c 2.